Consider the following 103-residue polypeptide: Large ribosomal subunit protein bL21 (103 aa).

It belongs to the bacterial ribosomal protein bL21 family. In terms of assembly, part of the 50S ribosomal subunit. Contacts protein L20.

Functionally, this protein binds to 23S rRNA in the presence of protein L20. The protein is Large ribosomal subunit protein bL21 of Acidithiobacillus ferrooxidans (strain ATCC 23270 / DSM 14882 / CIP 104768 / NCIMB 8455) (Ferrobacillus ferrooxidans (strain ATCC 23270)).